The primary structure comprises 1328 residues: MPVVMARDLEETASSSEDEDLANQEDHPCIMWTGGCRRIPVLVFHAEAILTKDNNIRVIGERYHLSYKIVRTDSRLVRSILTAHGFHEVHPSSTDYNLMWTGSHLKPFLLRTLSEAQKVNHFPRSYELTRKDRLYKNIIRMQHTHGFKAFHILPQTFLLPAEYAEFCNSYSKDRGPWIVKPVASSRGRGVYLINNPNQISLEENILVSRYINNPLLIDDFKFDVRLYVLVTSYDPLVIYLYEEGLARFATVRYDQGSKNIRNQFMHLTNYSVNKKSGDYVSCDDPEVEDYGNKWSMSAMLRYLKQEGKDTTALMAHVEDLIIKTIISAELAIATACKTFVPHRSSCFELYGFDVLIDNTLKPWLLEVNLSPSLACDAPLDLKIKASMISDMFTVVGFVCQDPAQRTSNRSIYPSFESSRRNPFQKPQRTRPLSASDAEMKNLVASAREKVPGKLGGSVLGLSMEEIKVLRRVKEENDRRGGFIRIFPTSETWEIYGSYLEHKTSMNYMLATRLFQDRGNPRRSLLTGRARVSTEGAPELKVESMNSKAKLHAALYERKLLSLEVRKRRRRSGRLRAMRPKYPVIAQPAEMNIKTETESEEEEEVGLDNDDEEQEASQEESAGSLGENQAKYTPSLTVIVENSPRDNAMKVAEWTNKGEPCCKIEAQEPESKFNLMQILQDNGNLSKVQARLAFSAYLQHVQIRLTKDSGGQTLSPSWAAKEDEQMELVVRFLKRASSNLQHSLRMVLPSRRLALLERRRILAHQLGDFIGVYNKETEQMAEKKSKKKLEEEEEDGVNAESFQEFIRQASEAELEEVLTFYTQKNKSASVFLGTHSKSSKNSSSYSDSGAKGDHPETIQEVKIKQPKQQQATEIHADKLSRFTTSSGKEAKLVYTNCSSFCSPAAVLLQRLPSSHLSSVITTSALSAGPGHHASLSQIPPAVPSLPHQPALLLSPVPDNAPPSIHSGTQNVSPAGLPRCRSGSYTIGPFSSFQSAAHIYSQKLSRPSSAKAAGSCHPHKHHSGIAKTQKEGEDVSLNRRYNQSLVTAELQRLAEKQAARQYSPASHISLLTQQVTNLNLASSVINRSSASTPPTLRPVISPSGPTWSIQPDLHASETHSSPPGSRSLQTGGFAWEGEVENNAYSKTTGVVPQHKYHPTAGSYQLHFALQQLEQQKLQSRQLLDQSRARHQAIFGSQTLPNSSLWTMNNGPGCRISSATTGGQKPNTLPQKVVAPPNSSTLVSKPASNHKQVLRKPASQRASKGSSAEGQLNGLQSSLNPAAFMPITNSTGSLEAPQVIFARSKPLPTQSGALATVIGQRKSKSVKSGTI.

Residues 1–22 are disordered; it reads MPVVMARDLEETASSSEDEDLA. The TTL domain maps to 62 to 407; the sequence is RYHLSYKIVR…VCQDPAQRTS (346 aa). ATP-binding positions include K180, 186 to 187, 208 to 211, and 221 to 223; these read RG, SRYI, and KFD. R186 contacts a protein. Residue R247 participates in L-glutamate binding. Residue 268–269 participates in ATP binding; the sequence is TN. Residues Y270, S271, and K293 each contribute to the L-glutamate site. Positions 353, 366, and 368 each coordinate Mg(2+). A c-MTBD region region spans residues 378-488; it reads PLDLKIKASM…RGGFIRIFPT (111 aa). K384 provides a ligand contact to L-glutamate. 7 disordered regions span residues 411–436, 585–631, 834–853, 948–975, 1006–1032, 1085–1129, and 1212–1271; these read IYPSFESSRRNPFQKPQRTRPLSASD, AQPA…QAKY, HSKSSKNSSSYSDSGAKGDH, PALLLSPVPDNAPPSIHSGTQNVSPAGL, SSAKAAGSCHPHKHHSGIAKTQKEGED, RSSA…LQTG, and RISS…QLNG. Residues 420–432 are compositionally biased toward polar residues; sequence RNPFQKPQRTRPL. Residues 597–617 show a composition bias toward acidic residues; the sequence is ESEEEEEVGLDNDDEEQEASQ. Positions 838-847 are enriched in low complexity; the sequence is SKNSSSYSDS. 4 stretches are compositionally biased toward polar residues: residues 1116–1128, 1214–1227, 1234–1248, and 1257–1271; these read THSSPPGSRSLQT, SSATTGGQKPNTLP, PNSSTLVSKPASNHK, and QRASKGSSAEGQLNG.

It belongs to the tubulin--tyrosine ligase family. As to quaternary structure, interacts with the transcriptional coactivators NCOA1/SRC-1 and NCOA2/TIF2. Mg(2+) serves as cofactor. Highly expressed in brain, kidney, liver, spleen and testis. Expressed in heart, lung, muscle and trachea.

The protein localises to the cell projection. It localises to the cilium. It is found in the cytoplasm. The protein resides in the cytoskeleton. Its subcellular location is the cilium basal body. The protein localises to the nucleus. The catalysed reaction is L-glutamyl-[protein] + L-glutamate + ATP = gamma-L-glutamyl-L-glutamyl-[protein] + ADP + phosphate + H(+). It carries out the reaction (L-glutamyl)(n)-gamma-L-glutamyl-L-glutamyl-[protein] + L-glutamate + ATP = (L-glutamyl)(n+1)-gamma-L-glutamyl-L-glutamyl-[protein] + ADP + phosphate + H(+). Its function is as follows. Polyglutamylase which modifies tubulin, generating polyglutamate side chains on the gamma-carboxyl group of specific glutamate residues within the C-terminal tail of tubulin. Preferentially mediates ATP-dependent initiation step of the polyglutamylation reaction over the elongation step. Preferentially modifies the alpha-tubulin tail over a beta-tail. Required for CCSAP localization to both polyglutamylated spindle and cilia microtubules. Increases the effects of transcriptional coactivator NCOA2/TIF2 in glucocorticoid receptor-mediated repression and induction and in androgen receptor-mediated induction. In Mus musculus (Mouse), this protein is Tubulin polyglutamylase TTLL5.